We begin with the raw amino-acid sequence, 383 residues long: Chitinase-3-like protein 1 (383 aa).

The first 21 residues, Met1–Ala21, serve as a signal peptide directing secretion. The 362-residue stretch at Tyr22–Val383 folds into the GH18 domain. Cys26 and Cys51 form a disulfide bridge. N-linked (GlcNAc...) asparagine glycosylation is present at Asn60. Chitin is bound by residues Glu70 to Trp71, Gly97 to Asn100, Tyr141, Leu204 to Asp207, and Arg263. An intrachain disulfide couples Cys300 to Cys364. An important for AKT1 activation and IL8 production region spans residues Gln324–Ala338. Trp352 is a binding site for chitin. N-linked (GlcNAc...) asparagine glycosylation is present at Asn367.

The protein belongs to the glycosyl hydrolase 18 family. Monomer.

It localises to the secreted. The protein localises to the extracellular space. Its subcellular location is the cytoplasm. The protein resides in the perinuclear region. It is found in the endoplasmic reticulum. Its function is as follows. Carbohydrate-binding lectin with a preference for chitin. Has no chitinase activity. May play a role in tissue remodeling and in the capacity of cells to respond to and cope with changes in their environment. Plays a role in T-helper cell type 2 (Th2) inflammatory response and IL-13-induced inflammation, regulating allergen sensitization, inflammatory cell apoptosis, dendritic cell accumulation and M2 macrophage differentiation. Facilitates invasion of pathogenic enteric bacteria into colonic mucosa and lymphoid organs. Mediates activation of AKT1 signaling pathway and subsequent IL8 production in colonic epithelial cells. Regulates antibacterial responses in lung by contributing to macrophage bacterial killing, controlling bacterial dissemination and augmenting host tolerance. Also regulates hyperoxia-induced injury, inflammation and epithelial apoptosis in lung. This Capra hircus (Goat) protein is Chitinase-3-like protein 1 (CHI3L1).